The sequence spans 272 residues: Dermonecrotic toxin SpeSicTox-betaIB1a (272 aa).

Residue His5 is part of the active site. Residues Glu25 and Asp27 each contribute to the Mg(2+) site. His41 serves as the catalytic Nucleophile. 2 cysteine pairs are disulfide-bonded: Cys45–Cys51 and Cys47–Cys191. Asp85 is a binding site for Mg(2+).

The protein belongs to the arthropod phospholipase D family. Class II subfamily. Mg(2+) is required as a cofactor. As to expression, expressed by the venom gland.

The protein resides in the secreted. The catalysed reaction is an N-(acyl)-sphingosylphosphocholine = an N-(acyl)-sphingosyl-1,3-cyclic phosphate + choline. The enzyme catalyses an N-(acyl)-sphingosylphosphoethanolamine = an N-(acyl)-sphingosyl-1,3-cyclic phosphate + ethanolamine. It carries out the reaction a 1-acyl-sn-glycero-3-phosphocholine = a 1-acyl-sn-glycero-2,3-cyclic phosphate + choline. It catalyses the reaction a 1-acyl-sn-glycero-3-phosphoethanolamine = a 1-acyl-sn-glycero-2,3-cyclic phosphate + ethanolamine. Dermonecrotic toxins cleave the phosphodiester linkage between the phosphate and headgroup of certain phospholipids (sphingolipid and lysolipid substrates), forming an alcohol (often choline) and a cyclic phosphate. This toxin acts on sphingomyelin (SM). It may also act on ceramide phosphoethanolamine (CPE), lysophosphatidylcholine (LPC) and lysophosphatidylethanolamine (LPE), but not on lysophosphatidylserine (LPS), and lysophosphatidylglycerol (LPG). It acts by transphosphatidylation, releasing exclusively cyclic phosphate products as second products. Induces dermonecrosis, hemolysis, increased vascular permeability, edema, inflammatory response, and platelet aggregation. This chain is Dermonecrotic toxin SpeSicTox-betaIB1a, found in Sicarius peruensis (Six-eyed sand spider).